We begin with the raw amino-acid sequence, 386 residues long: Succinate--CoA ligase [ADP-forming] subunit beta (386 aa).

The 236-residue stretch at 9 to 244 folds into the ATP-grasp domain; it reads KEILRNFGVP…LDEEDPAEVE (236 aa). Residues K46, 53–55, E99, A102, and E107 contribute to the ATP site; that span reads GRG. Mg(2+) is bound by residues N199 and D213. Residues N264 and 321 to 323 each bind substrate; that span reads GIM.

It belongs to the succinate/malate CoA ligase beta subunit family. Heterotetramer of two alpha and two beta subunits. Mg(2+) is required as a cofactor.

It carries out the reaction succinate + ATP + CoA = succinyl-CoA + ADP + phosphate. The enzyme catalyses GTP + succinate + CoA = succinyl-CoA + GDP + phosphate. It functions in the pathway carbohydrate metabolism; tricarboxylic acid cycle; succinate from succinyl-CoA (ligase route): step 1/1. Its function is as follows. Succinyl-CoA synthetase functions in the citric acid cycle (TCA), coupling the hydrolysis of succinyl-CoA to the synthesis of either ATP or GTP and thus represents the only step of substrate-level phosphorylation in the TCA. The beta subunit provides nucleotide specificity of the enzyme and binds the substrate succinate, while the binding sites for coenzyme A and phosphate are found in the alpha subunit. The polypeptide is Succinate--CoA ligase [ADP-forming] subunit beta (Polaromonas naphthalenivorans (strain CJ2)).